A 588-amino-acid polypeptide reads, in one-letter code: L-fucose isomerase (588 aa).

Catalysis depends on proton acceptor residues Glu335 and Asp359. Glu335, Asp359, and His525 together coordinate Mn(2+).

This sequence belongs to the L-fucose isomerase family. Mn(2+) serves as cofactor.

Its subcellular location is the cytoplasm. The catalysed reaction is L-fucose = L-fuculose. The protein operates within carbohydrate degradation; L-fucose degradation; L-lactaldehyde and glycerone phosphate from L-fucose: step 1/3. Its function is as follows. Converts the aldose L-fucose into the corresponding ketose L-fuculose. The protein is L-fucose isomerase of Streptococcus pneumoniae (strain 70585).